The chain runs to 413 residues: MNLLVFFCFFLLSCIVHLSRCSDNNSYSFEIVNRSTWLNIAERIFKGNAPFNFTIIPYNYVNNSTEENNNKDSVLLISKNLKNSSNPVDENNHIIDSTKKNTSNNNNNNSNIVGIYESQVHEEKIKEDNTRQDNINKKENEIINNNHQIPVSNIFSENIDNNKNYIESNYKSTYNNNPELIHSTDFIGSNNNHTFNFLSRYNNSVLNNMQGNTKVPGNVPELKARIFSEEENTEVESAENNHTNSLNPNESCDQIIKLGDIINSVNEKIISINSTVNNVLCINLDSVNGNGFVWTLLGVHKKKPLIDPSNFPTKRVTQSYVSPDISVTNPVPIPKNSNTNKDDSINNKQDGSQNNTTTNHFPKPREQLVGGSSMLISKIKPHKPGKYFIVYSYYRPFDPTRDTNTRIVELNVQ.

The first 21 residues, 1–21, serve as a signal peptide directing secretion; sequence MNLLVFFCFFLLSCIVHLSRC. A BC loop; binds and inhibits the active site cavity of cysteine proteases motif is present at residues 284–294; sequence LDSVNGNGFVW. Polar residues-rich tracts occupy residues 325-339 and 346-360; these read ISVTNPVPIPKNSNT and NNKQDGSQNNTTTNH. A disordered region spans residues 325–367; it reads ISVTNPVPIPKNSNTNKDDSINNKQDGSQNNTTTNHFPKPREQ.

Belongs to the protease inhibitor I71 family. In terms of assembly, oligomer; probably composed of 10 monomers. Proteolytically cleaved.

It is found in the secreted. The protein localises to the cytoplasmic vesicle. The protein resides in the secretory vesicle. Its subcellular location is the microneme. It localises to the parasitophorous vacuole lumen. It is found in the host cytoplasm. Cysteine protease inhibitor. Inhibits cysteine protease falcipains FP2 and FP3. Required for the invasion of host erythrocytes by merozoites. In the mosquito vector, essential for the gliding motility of hemocoel sporozoites and, therefore, for salivary gland invasion and the subsequent transmission from the mosquito to the mammalian host. Required for the invasion of host hepatocytes. During the liver stage, may prevent host hepatocyte cell death likely by inhibiting host cysteine proteases. This chain is Falstatin, found in Plasmodium falciparum (isolate 3D7).